Reading from the N-terminus, the 186-residue chain is Peptidyl-tRNA hydrolase (186 aa).

Tyrosine 14 is a tRNA binding site. Residue histidine 19 is the Proton acceptor of the active site. TRNA is bound by residues phenylalanine 64, asparagine 66, and asparagine 112.

Belongs to the PTH family. As to quaternary structure, monomer.

Its subcellular location is the cytoplasm. The enzyme catalyses an N-acyl-L-alpha-aminoacyl-tRNA + H2O = an N-acyl-L-amino acid + a tRNA + H(+). Its function is as follows. Hydrolyzes ribosome-free peptidyl-tRNAs (with 1 or more amino acids incorporated), which drop off the ribosome during protein synthesis, or as a result of ribosome stalling. In terms of biological role, catalyzes the release of premature peptidyl moieties from peptidyl-tRNA molecules trapped in stalled 50S ribosomal subunits, and thus maintains levels of free tRNAs and 50S ribosomes. The protein is Peptidyl-tRNA hydrolase of Mycoplasma mycoides subsp. mycoides SC (strain CCUG 32753 / NCTC 10114 / PG1).